Consider the following 146-residue polypeptide: Transcription antitermination protein NusB (146 aa).

The protein belongs to the NusB family.

Its function is as follows. Involved in transcription antitermination. Required for transcription of ribosomal RNA (rRNA) genes. Binds specifically to the boxA antiterminator sequence of the ribosomal RNA (rrn) operons. The polypeptide is Transcription antitermination protein NusB (Koribacter versatilis (strain Ellin345)).